The following is a 215-amino-acid chain: Probable phosphoglycerate mutase GpmB (215 aa).

Residues 8–15 (RHGETEWN), 21–22 (QG), arginine 58, arginine 60, 82–85 (ELHM), and 151–152 (GI) each bind substrate. Histidine 9 functions as the Tele-phosphohistidine intermediate in the catalytic mechanism. The active-site Proton donor/acceptor is the glutamate 82.

Belongs to the phosphoglycerate mutase family. GpmB subfamily.

It catalyses the reaction (2R)-2-phosphoglycerate = (2R)-3-phosphoglycerate. It participates in carbohydrate degradation; glycolysis; pyruvate from D-glyceraldehyde 3-phosphate: step 3/5. This chain is Probable phosphoglycerate mutase GpmB, found in Serratia proteamaculans (strain 568).